We begin with the raw amino-acid sequence, 215 residues long: Protein C' (215 aa).

Residues 12–34 (MPSFLKKILKLRGRRQEDESRSR) form a disordered region. Residues 15–22 (FLKKILKL) form an involved in self-degradation and in host STAT1 degradation region.

It belongs to the respirovirus protein C family. In terms of assembly, the different isoforms interact (via C-terminus) with unphosphorylated and phosphorylated human STAT1 (via N-terminus), favoring the formation of parallel STAT1 homodimers. The different isoforms do not interact with host STAT2. C protein interacts with L protein; this interaction has an inhibitory effect on viral transcription and replication. In terms of processing, Y1 and Y2 proteins are produced not only by alternative initiation, but also by proteolytic cleavage of C'. Only alternative initiation is detected in vitro, whereas in vivo cleavage seems to be predominant.

The protein resides in the host cytoplasm. In terms of biological role, the different products prevent the establishment of cellular antiviral state by blocking the interferon-alpha/beta (IFN-alpha/beta) and IFN-gamma signaling pathways. They inhibit IFN-alpha/beta induced tyrosine phosphorylation of STAT1 and STAT2. Blocking the IFN-alpha/beta pathway requires binding to STAT1 in the cytoplasm. They inhibit IFN-gamma induced serine phosphorylation of STAT1. Block the IFN-gamma pathway by binding to and stabilizing the parallel form of the STAT1 dimer, further inducing high-molecular-weight complex formation and inhibition of transcription by IFN-gamma. May also have a role in preventing the cell to enter apoptosis. Modulate regulation of viral transcription and replication. Overexpression inhibits the viral RNA polymerase. The absence of all C', C, Y1 and Y2 proteins leads to viral delayed growth. Plays an important role in virion particles release. Modulates virion shape. This chain is Protein C' (P/V/C), found in Sendai virus (strain Nagoya) (SeV).